A 688-amino-acid chain; its full sequence is DNA ligase (688 aa).

NAD(+) contacts are provided by residues 42 to 46 (DAEYD), 91 to 92 (SL), and Glu-128. The active-site N6-AMP-lysine intermediate is the Lys-130. Residues Arg-151, Glu-188, Lys-305, and Lys-329 each contribute to the NAD(+) site. The Zn(2+) site is built by Cys-423, Cys-426, Cys-441, and Cys-447. Positions 608-688 (APQGVLAGKT…GMRKLLEGQL (81 aa)) constitute a BRCT domain.

This sequence belongs to the NAD-dependent DNA ligase family. LigA subfamily. It depends on Mg(2+) as a cofactor. Mn(2+) serves as cofactor.

It carries out the reaction NAD(+) + (deoxyribonucleotide)n-3'-hydroxyl + 5'-phospho-(deoxyribonucleotide)m = (deoxyribonucleotide)n+m + AMP + beta-nicotinamide D-nucleotide.. Functionally, DNA ligase that catalyzes the formation of phosphodiester linkages between 5'-phosphoryl and 3'-hydroxyl groups in double-stranded DNA using NAD as a coenzyme and as the energy source for the reaction. It is essential for DNA replication and repair of damaged DNA. The sequence is that of DNA ligase from Paraburkholderia phytofirmans (strain DSM 17436 / LMG 22146 / PsJN) (Burkholderia phytofirmans).